Consider the following 427-residue polypeptide: Trigger factor (427 aa).

In terms of domain architecture, PPIase FKBP-type spans 163–248 (GDTVVIDFVG…VHEVKAKEVP (86 aa)).

This sequence belongs to the FKBP-type PPIase family. Tig subfamily.

It is found in the cytoplasm. The enzyme catalyses [protein]-peptidylproline (omega=180) = [protein]-peptidylproline (omega=0). In terms of biological role, involved in protein export. Acts as a chaperone by maintaining the newly synthesized protein in an open conformation. Functions as a peptidyl-prolyl cis-trans isomerase. The polypeptide is Trigger factor (Streptococcus equi subsp. equi (strain 4047)).